Consider the following 271-residue polypeptide: uncharacterized protein (271 aa).

Disordered regions lie at residues Lys-50–Leu-93 and Lys-128–Val-233. 2 stretches are compositionally biased toward low complexity: residues Ser-61–Leu-93 and Asn-129–Asn-165. Over residues Thr-169–Asn-179 the composition is skewed to basic and acidic residues. 2 stretches are compositionally biased toward acidic residues: residues Glu-180–Glu-199 and Met-207–Glu-217.

This is an uncharacterized protein from Dictyostelium discoideum (Social amoeba).